The chain runs to 434 residues: Methylenetetrahydrofolate--tRNA-(uracil-5-)-methyltransferase TrmFO (434 aa).

9 to 14 (GAGLAG) contributes to the FAD binding site.

This sequence belongs to the MnmG family. TrmFO subfamily. The cofactor is FAD.

Its subcellular location is the cytoplasm. The catalysed reaction is uridine(54) in tRNA + (6R)-5,10-methylene-5,6,7,8-tetrahydrofolate + NADH + H(+) = 5-methyluridine(54) in tRNA + (6S)-5,6,7,8-tetrahydrofolate + NAD(+). The enzyme catalyses uridine(54) in tRNA + (6R)-5,10-methylene-5,6,7,8-tetrahydrofolate + NADPH + H(+) = 5-methyluridine(54) in tRNA + (6S)-5,6,7,8-tetrahydrofolate + NADP(+). In terms of biological role, catalyzes the folate-dependent formation of 5-methyl-uridine at position 54 (M-5-U54) in all tRNAs. This is Methylenetetrahydrofolate--tRNA-(uracil-5-)-methyltransferase TrmFO from Listeria monocytogenes serotype 4b (strain F2365).